A 297-amino-acid chain; its full sequence is 4-hydroxy-tetrahydrodipicolinate synthase (297 aa).

Thr-47 contacts pyruvate. The active-site Proton donor/acceptor is Tyr-135. Residue Lys-163 is the Schiff-base intermediate with substrate of the active site. Ile-205 contacts pyruvate.

The protein belongs to the DapA family. As to quaternary structure, homotetramer; dimer of dimers.

The protein resides in the cytoplasm. It catalyses the reaction L-aspartate 4-semialdehyde + pyruvate = (2S,4S)-4-hydroxy-2,3,4,5-tetrahydrodipicolinate + H2O + H(+). The protein operates within amino-acid biosynthesis; L-lysine biosynthesis via DAP pathway; (S)-tetrahydrodipicolinate from L-aspartate: step 3/4. Functionally, catalyzes the condensation of (S)-aspartate-beta-semialdehyde [(S)-ASA] and pyruvate to 4-hydroxy-tetrahydrodipicolinate (HTPA). The sequence is that of 4-hydroxy-tetrahydrodipicolinate synthase from Dehalococcoides mccartyi (strain ATCC BAA-2100 / JCM 16839 / KCTC 5957 / BAV1).